Here is a 781-residue protein sequence, read N- to C-terminus: Tax1-binding protein 1 homolog A (781 aa).

Coiled coils occupy residues 148–453 (NSDI…QGDA) and 488–581 (DVEK…YMRE). Positions 441–465 (KLTQQQETQQGDANRNDASTETTLE) are enriched in polar residues. 2 disordered regions span residues 441 to 510 (KLTQ…EEEC) and 630 to 691 (ETRD…EAPA). Residues 484–495 (TVARDVEKSRDE) show a composition bias toward basic and acidic residues. A compositionally biased stretch (acidic residues) spans 496–510 (EGNEQEEEDEEEEEC). Over residues 646-656 (RPPPLAPPPWG) the composition is skewed to pro residues. UBZ1-type zinc fingers lie at residues 716-742 (HKQC…VESH) and 743-769 (WRVC…VHTH). Positions 719, 722, 738, 742, 746, 749, 765, and 769 each coordinate Zn(2+).

As to expression, little expression is observed during pectoral fin development, except for an elevated level of expression in the distal mesenchyme cells of some samples.

In terms of biological role, may have anti-apoptotic activity. The polypeptide is Tax1-binding protein 1 homolog A (Danio rerio (Zebrafish)).